A 413-amino-acid chain; its full sequence is MQYKKTLVASALAATTLAAYAPSEPWSTLTPTATYSGGVTDYASTFGIAVQPISTTSSASSAATTASSKAKRAASQIGDGQVQAATTTASVSTKSTAAAVSQIGDGQIQATTKTTAAAVSQIGDGQIQATTKTTSAKTTAAAVSQISDGQIQATTTTLAPKSTAAAVSQIGDGQVQATTTTLAPKSTAAAVSQIGDGQVQATTKTTAAAVSQIGDGQVQATTKTTAAAVSQIGDGQVQATTKTTAAAVSQIGDGQVQATTKTTAAAVSQITDGQVQATTKTTQAASQVSDGQVQATTATSASAAATSTDPVDAVSCKTSGTLEMNLKGGILTDGKGRIGSIVANRQFQFDGPPPQAGAIYAAGWSITPDGNLAIGDNDVFYQCLSGTFYNLYDEHIGSQCTPVHLEAIDLIDC.

The first 18 residues, 1 to 18, serve as a signal peptide directing secretion; sequence MQYKKTLVASALAATTLA. A propeptide spanning residues 19 to 72 is cleaved from the precursor; the sequence is AYAPSEPWSTLTPTATYSGGVTDYASTFGIAVQPISTTSSASSAATTASSKAKR. PIR1/2/3 repeat units lie at residues 73–89, 97–115, 116–134, 140–158, 164–182, 188–206, 207–225, 226–244, 245–263, 264–282, and 283–300; these read AASQ…TTTA, AAAV…TKTT, AAAV…TTTL, and QAAS…TATS.

It belongs to the PIR protein family. Covalently linked to beta-1,3-glucan of the inner cell wall layer via an alkali-sensitive ester linkage between the gamma-carboxyl group of glutamic acids, arising from specific glutamines within the PIR1/2/3 repeats, and hydroxyl groups of glucoses of beta-1,3-glucan chains. In terms of processing, the propeptide is cleaved off in the late Golgi. While both peptides are secreted, only a fraction of the mature glycoprotein is incorporated into the cell wall. Post-translationally, O-glycosylated. Extensively O-mannosylated.

The protein resides in the secreted. The protein localises to the cell wall. Component of the outer cell wall layer. Required for stability of the cell wall and for optimal growth. Required for resistance against several antifungal and cell wall-perturbing agents and for tolerance to heat shock. This Saccharomyces cerevisiae (strain ATCC 204508 / S288c) (Baker's yeast) protein is Cell wall mannoprotein HSP150 (HSP150).